The following is a 478-amino-acid chain: Sulfate adenylyltransferase subunit 1 (478 aa).

Residues 28–244 form the tr-type G domain; the sequence is KTMLRFLTCG…LESVDVVNAR (217 aa). Residues 37–44 form a G1 region; sequence GSVDDGKS. A GTP-binding site is contributed by 37-44; that stretch reads GSVDDGKS. The segment at 95–99 is G2; that stretch reads GITID. Positions 116–119 are G3; sequence DTPG. GTP-binding positions include 116–120 and 171–174; these read DTPGH and NKMD. Positions 171–174 are G4; that stretch reads NKMD. The interval 209 to 211 is G5; that stretch reads SAL.

The protein belongs to the TRAFAC class translation factor GTPase superfamily. Classic translation factor GTPase family. CysN/NodQ subfamily. Heterodimer composed of CysD, the smaller subunit, and CysN.

It catalyses the reaction sulfate + ATP + H(+) = adenosine 5'-phosphosulfate + diphosphate. Its pathway is sulfur metabolism; hydrogen sulfide biosynthesis; sulfite from sulfate: step 1/3. Functionally, with CysD forms the ATP sulfurylase (ATPS) that catalyzes the adenylation of sulfate producing adenosine 5'-phosphosulfate (APS) and diphosphate, the first enzymatic step in sulfur assimilation pathway. APS synthesis involves the formation of a high-energy phosphoric-sulfuric acid anhydride bond driven by GTP hydrolysis by CysN coupled to ATP hydrolysis by CysD. This Yersinia pseudotuberculosis serotype O:1b (strain IP 31758) protein is Sulfate adenylyltransferase subunit 1.